A 432-amino-acid polypeptide reads, in one-letter code: Septin-14 (432 aa).

The 267-residue stretch at 49–315 (QGFTFNILCV…ECYRYQKLQK (267 aa)) folds into the Septin-type G domain. The G1 motif stretch occupies residues 59–66 (GETGIGKS). GTP contacts are provided by residues 59-66 (GETGIGKS), Gly114, 195-203 (KADTISKND), Gly249, and Arg264. Residues 111–114 (ETVG) are G3 motif. Residues 194–197 (AKAD) form a G4 motif region. The stretch at 332 to 412 (EIFEAKRQEF…IIDFYKMKAA (81 aa)) forms a coiled coil. The interval 369-432 (EAEKELQDKF…DTKKDKHRKK (64 aa)) is required for interaction with SEPTIN4. Required for migration of cortical neurons during corticogenesis.

The protein belongs to the TRAFAC class TrmE-Era-EngA-EngB-Septin-like GTPase superfamily. Septin GTPase family. In terms of assembly, septins polymerize into heterooligomeric protein complexes that form filaments, and can associate with cellular membranes, actin filaments and microtubules. GTPase activity is required for filament formation. Interacts with ACTN4. Interacts with SEPTIN9. Interacts (via C-terminus) with SEPTIN4. In terms of tissue distribution, testis-specific (at protein level).

The protein resides in the cytoplasm. Its subcellular location is the cytoskeleton. It is found in the cell projection. It localises to the axon. The protein localises to the dendrite. The protein resides in the perikaryon. Its subcellular location is the perinuclear region. It is found in the cytoplasmic vesicle. It localises to the secretory vesicle. The protein localises to the acrosome. Filament-forming cytoskeletal GTPase. Involved in the migration of cortical neurons and the formation of neuron leading processes during embryonic development. Plays a role in sperm head formation during spermiogenesis, potentially via facilitating localization of ACTN4 to cell filaments. The chain is Septin-14 from Homo sapiens (Human).